The following is a 239-amino-acid chain: Ribosomal RNA small subunit methyltransferase G (239 aa).

Residues glycine 76, phenylalanine 81, 99-101 (DSS), 128-129 (IE), and arginine 147 contribute to the S-adenosyl-L-methionine site.

The protein belongs to the methyltransferase superfamily. RNA methyltransferase RsmG family.

The protein localises to the cytoplasm. Specifically methylates the N7 position of a guanine in 16S rRNA. The protein is Ribosomal RNA small subunit methyltransferase G of Prochlorococcus marinus (strain MIT 9515).